The chain runs to 119 residues: Large ribosomal subunit protein bL20 (119 aa).

This sequence belongs to the bacterial ribosomal protein bL20 family.

In terms of biological role, binds directly to 23S ribosomal RNA and is necessary for the in vitro assembly process of the 50S ribosomal subunit. It is not involved in the protein synthesizing functions of that subunit. This Shewanella frigidimarina (strain NCIMB 400) protein is Large ribosomal subunit protein bL20.